Reading from the N-terminus, the 421-residue chain is MKLFKNLTVQVITAVIIGVIVGLVWPDVGKEMKPLGDTFINAVKMVIAPIIFFTIVLGIAKMGDMKKVGKVGGKAFIYFEVVTTLALIIGLFVVNIMKPGAGLDYSKLEKGDVSQYTQNGGQGIDWIEFITHIVPSNMVDAFAKGDILQVLFFSILFGVGLAALGEKGKSVIDFFDKVSHVFFKIIGYIMRAAPIGAFGAMAYTIGHFGLDSIKPLASLMMSVYITMFLFVFVALNIICKLYGFSLWNYLRFIKDELLIVLGTSSSESVLPRMMDKMERYGCSKSVVGLVIPTGYSFNLDGTSIYLSMATVFLAQVFGVDLSIGQQITIILVLMLTSKGAAGVTGSGFIVLASTLSALQVIPLEGLALLLGVDRFMSEGRAIVNLIGNGIATIIVAKSENEFDEAKSIEAVEGMKKMKTAV.

A run of 8 helical transmembrane segments spans residues 9–29 (VQVITAVIIGVIVGLVWPDVG), 39–59 (FINAVKMVIAPIIFFTIVLGI), 76–96 (FIYFEVVTTLALIIGLFVVNI), 145–165 (GDILQVLFFSILFGVGLAALG), 185–205 (IIGYIMRAAPIGAFGAMAYTI), 219–239 (LMMSVYITMFLFVFVALNIIC), 316–336 (VFGVDLSIGQQITIILVLMLT), and 348–368 (FIVLASTLSALQVIPLEGLAL).

Belongs to the dicarboxylate/amino acid:cation symporter (DAACS) (TC 2.A.23) family.

It localises to the cell membrane. Functionally, responsible for the transport of succinate and fumarate, but not malate, across the membrane. In Bacillus subtilis (strain 168), this protein is C4-dicarboxylate transport protein (dctA).